Reading from the N-terminus, the 83-residue chain is NADH dehydrogenase [ubiquinone] iron-sulfur protein 5-B (83 aa).

The CHCH domain occupies 11–52 (KGRCYDFWMDFSECMSHCREPKDCTLLREDYLECLHHSKEFQ). 2 consecutive short sequence motifs (cx9C motif) follow at residues 14–24 (CYDFWMDFSEC) and 34–44 (CTLLREDYLEC). 2 cysteine pairs are disulfide-bonded: C14–C44 and C24–C34. The segment at 62-83 (QRKLRAASRKGEETGDGTHTHH) is disordered.

The protein belongs to the complex I NDUFS5 subunit family. In terms of assembly, complex I is composed of at least 49 different subunits. This is a component of the iron-sulfur (IP) fragment of the enzyme.

It localises to the mitochondrion. The protein resides in the mitochondrion inner membrane. Its subcellular location is the mitochondrion intermembrane space. Functionally, accessory subunit of the mitochondrial membrane respiratory chain NADH dehydrogenase (Complex I), that is believed not to be involved in catalysis. Complex I functions in the transfer of electrons from NADH to the respiratory chain. The immediate electron acceptor for the enzyme is believed to be ubiquinone. This chain is NADH dehydrogenase [ubiquinone] iron-sulfur protein 5-B, found in Arabidopsis thaliana (Mouse-ear cress).